The chain runs to 400 residues: Enoyl-[acyl-carrier-protein] reductase [NADH] (400 aa).

NAD(+) contacts are provided by residues 48 to 53 (GASSGY), 74 to 75 (FE), 111 to 112 (DA), and 139 to 140 (LA). Tyrosine 225 is a binding site for substrate. Tyrosine 235 serves as the catalytic Proton donor. NAD(+)-binding positions include lysine 244 and 273–275 (VVT).

Belongs to the TER reductase family. In terms of assembly, monomer.

It carries out the reaction a 2,3-saturated acyl-[ACP] + NAD(+) = a (2E)-enoyl-[ACP] + NADH + H(+). The protein operates within lipid metabolism; fatty acid biosynthesis. Its function is as follows. Involved in the final reduction of the elongation cycle of fatty acid synthesis (FAS II). Catalyzes the reduction of a carbon-carbon double bond in an enoyl moiety that is covalently linked to an acyl carrier protein (ACP). This chain is Enoyl-[acyl-carrier-protein] reductase [NADH], found in Marinomonas sp. (strain MWYL1).